Reading from the N-terminus, the 230-residue chain is Heptaprenylglyceryl phosphate synthase (230 aa).

Sn-glycerol 1-phosphate is bound at residue Lys-12. Positions 14 and 40 each coordinate Mg(2+). Residues 159-164, Gly-189, and 209-210 contribute to the sn-glycerol 1-phosphate site; these read YIEYSG and GD.

Belongs to the GGGP/HepGP synthase family. Group I subfamily. In terms of assembly, homodimer. Mg(2+) serves as cofactor.

It carries out the reaction sn-glycerol 1-phosphate + all-trans-heptaprenyl diphosphate = 3-heptaprenyl-sn-glycero-1-phosphate + diphosphate. It functions in the pathway membrane lipid metabolism; glycerophospholipid metabolism. Prenyltransferase that catalyzes in vivo the transfer of the heptaprenyl moiety of heptaprenyl pyrophosphate (HepPP; 35 carbon atoms) to the C3 hydroxyl of sn-glycerol-1-phosphate (G1P), producing heptaprenylglyceryl phosphate (HepGP). This reaction is an ether-bond-formation step in the biosynthesis of archaea-type G1P-based membrane lipids found in Bacillales. The protein is Heptaprenylglyceryl phosphate synthase of Staphylococcus aureus (strain MRSA252).